We begin with the raw amino-acid sequence, 389 residues long: WAT1-related protein At1g21890 (389 aa).

10 helical membrane passes run 13–33 (LAMI…MVSL), 40–60 (YVLA…FALF), 73–93 (IFLQ…NLYY), 102–122 (TFAS…AIIF), 142–162 (VITV…VDFI), 191–211 (WIPG…FFIL), 225–245 (LTTL…LVTV), 260–280 (FAAA…QGVV), 287–307 (VFVA…GVVV), and 312–332 (IHLG…TVVW). 2 EamA domains span residues 23–150 (AGMY…GALL) and 205–331 (WAGF…YTVV). Positions 339 to 361 (RMTDDDEDCKGLPIKSPVKPVDT) are disordered.

The protein belongs to the drug/metabolite transporter (DMT) superfamily. Plant drug/metabolite exporter (P-DME) (TC 2.A.7.4) family.

Its subcellular location is the membrane. This chain is WAT1-related protein At1g21890, found in Arabidopsis thaliana (Mouse-ear cress).